Here is a 577-residue protein sequence, read N- to C-terminus: Polyadenylate-binding protein, cytoplasmic and nuclear (577 aa).

Residues 1–10 are compositionally biased toward basic and acidic residues; sequence MADITDKTAE. The interval 1–36 is disordered; the sequence is MADITDKTAEQLENLNIQDDQKQAATGSESQSVENS. Alanine 2 carries the post-translational modification N-acetylalanine. Residue lysine 7 forms a Glycyl lysine isopeptide (Lys-Gly) (interchain with G-Cter in ubiquitin) linkage. Residues 9-61 form a required and sufficient for nuclear export region; it reads AEQLENLNIQDDQKQAATGSESQSVENSSASLYVGDLEPSVSEAHLYDIFSPI. The segment covering 11–27 has biased composition (polar residues); the sequence is QLENLNIQDDQKQAATG. The short motif at 12–17 is the Nuclear export signal element; sequence LENLNI. 4 consecutive RRM domains span residues 38–116, 126–203, 219–296, and 322–399; these read ASLY…WSQR, GNIF…PHLS, TNLY…RAQK, and VNLF…IAQR. Omega-N-methylarginine is present on arginine 107. The residue at position 249 (serine 249) is a Phosphoserine. Residues 281–317 are required and sufficient for nuclear import; sequence DSELNGEKLYVGRAQKKNERMHVLKKQYEAYRLEKMA. Serine 332 is subject to Phosphoserine. Lysine 337 participates in a covalent cross-link: Glycyl lysine isopeptide (Lys-Gly) (interchain with G-Cter in ubiquitin). Residue serine 405 is modified to Phosphoserine. The interaction with SUP35 stretch occupies residues 473 to 577; it reads PPQFRNGPVY…KEQEQQTEQA (105 aa). The PABC domain maps to 489–568; the sequence is GFPRNANDNN…ASAAYESFKK (80 aa).

Belongs to the polyadenylate-binding protein type-1 family. In terms of assembly, binds to poly(A) mRNA to form a periodic structure with a packing density of one molecule per 25 adenylate residues. Interacts with the nuclear export factor CRM1 and with the importin SXM1. Interacts with RNA15, a component of the cleavage factor IA (CFIA) complex. Interacts with translation initiation factor eIF4G (TIF4631 or TIF4632) and release factor eRF3 (SUP35). Interacts with the PAB-dependent poly(A)-nuclease (PAN) complex regulatory subunit PAN3. Interacts with ARF1, DCP1, PBP1, the Hsp70 chaperone SSA1, and TPA1. Interacts with PAT1 in an RNA-dependent manner.

Its subcellular location is the cytoplasm. The protein localises to the nucleus. Binds the poly(A) tail of mRNA. Appears to be an important mediator of the multiple roles of the poly(A) tail in mRNA biogenesis, stability and translation. In the nucleus, interacts with the nuclear cleavage factor IA (CFIA), which is required for both mRNA cleavage and polyadenylation. Is also required for efficient mRNA export to the cytoplasm. Acts in concert with a poly(A)-specific nuclease (PAN) to affect poly(A) tail shortening, which may occur concomitantly with either nucleocytoplasmic mRNA transport or translational initiation. Regulates PAN activity via interaction with the stimulator PAN3 or the inhibitor PBP1. In the cytoplasm, affects both translation and mRNA decay. Stimulates translation by interaction with translation initiation factor eIF4G, a subunit of the cap-binding complex eIF4F, bringing the 5'- and 3'-ends of the mRNA in proximity. The formation of this circular mRNP structure appears to be critical for the synergistic effects of the cap and the poly(A) tail in facilitating translation initiation, recycling of ribosomes, and mRNA stability. Also regulates translation termination by recruiting eukaryotic release factor 3 (eRF3). Interaction with eRF3 is also required for regulation of normal mRNA decay through translation termination-coupled poly(A) shortening, probably mediated by PAN. Loss of PAB1 from the mRNP after deadenylation triggers mRNA degradation. Inhibits the major cytoplasmic mRNA deadenylase CCR4-NOT complex. Is also associated peripherally with COPI vesicles through its interaction with ARF1, and this is required for correct localization of the asymmetrically distributed ASH1 mRNA. The polypeptide is Polyadenylate-binding protein, cytoplasmic and nuclear (PAB1) (Saccharomyces cerevisiae (strain ATCC 204508 / S288c) (Baker's yeast)).